We begin with the raw amino-acid sequence, 594 residues long: Frizzled and smoothened-like protein A (594 aa).

A signal peptide spans Met-1–Ser-22. The Extracellular segment spans residues Gln-23–Thr-248. Residues Asn-27–Ile-173 enclose the FZ domain. Intrachain disulfides connect Cys-32–Cys-98 and Cys-41–Cys-91. 2 N-linked (GlcNAc...) asparagine glycosylation sites follow: Asn-55 and Asn-106. Cys-117 and Cys-170 are joined by a disulfide. Residues Asn-182, Asn-189, Asn-195, and Asn-206 are each glycosylated (N-linked (GlcNAc...) asparagine). A helical transmembrane segment spans residues Thr-249–Leu-269. At Asn-270–Thr-277 the chain is on the cytoplasmic side. A helical membrane pass occupies residues Ile-278–Ala-298. Over Ser-299–Gln-329 the chain is Extracellular. The helical transmembrane segment at Trp-330–Ile-350 threads the bilayer. The Cytoplasmic portion of the chain corresponds to Lys-351–Lys-361. The helical transmembrane segment at Tyr-362–Asp-382 threads the bilayer. Over Asp-383–Gly-403 the chain is Extracellular. The chain crosses the membrane as a helical span at residues Cys-404–Ile-424. Residues Tyr-425–Leu-448 lie on the Cytoplasmic side of the membrane. The helical transmembrane segment at Phe-449–Val-469 threads the bilayer. Topologically, residues Gln-470–Gln-507 are extracellular. Asn-479 is a glycosylation site (N-linked (GlcNAc...) asparagine). A helical transmembrane segment spans residues Phe-508 to Asn-528. The Cytoplasmic segment spans residues Ser-529–Leu-594.

The protein belongs to the G-protein coupled receptor Fz/Smo family.

It is found in the membrane. This chain is Frizzled and smoothened-like protein A (fslA), found in Dictyostelium discoideum (Social amoeba).